We begin with the raw amino-acid sequence, 96 residues long: Large ribosomal subunit protein uL23 (96 aa).

Belongs to the universal ribosomal protein uL23 family. In terms of assembly, part of the 50S ribosomal subunit. Contacts protein L29, and trigger factor when it is bound to the ribosome.

Its function is as follows. One of the early assembly proteins it binds 23S rRNA. One of the proteins that surrounds the polypeptide exit tunnel on the outside of the ribosome. Forms the main docking site for trigger factor binding to the ribosome. The polypeptide is Large ribosomal subunit protein uL23 (Onion yellows phytoplasma (strain OY-M)).